Reading from the N-terminus, the 552-residue chain is Hyaluronan synthase 2 (552 aa).

Over 1-11 (MHCERFLCVLR) the chain is Cytoplasmic. The chain crosses the membrane as a helical span at residues 12-32 (IIGTTLFGVSLLLGITAAYIV). Residues 33-45 (GYQFIQTDNYYFS) lie on the Extracellular side of the membrane. A helical membrane pass occupies residues 46–66 (FGLYGAFLASHLIIQSLFAFL). At 67 to 374 (EHRKMKKSLE…NAMWFHKHHL (308 aa)) the chain is on the cytoplasmic side. Position 110 is a phosphothreonine (threonine 110). Lysine 190 participates in a covalent cross-link: Glycyl lysine isopeptide (Lys-Gly) (interchain with G-Cter in ubiquitin). Serine 221 is a glycosylation site (O-linked (GlcNAc) serine). Threonine 328 is modified (phosphothreonine). Residues 375 to 395 (WMTYEAVITGFFPFFLIATVI) traverse the membrane as a helical segment. The Extracellular segment spans residues 396–402 (QLFYRGK). The chain crosses the membrane as a helical span at residues 403–423 (IWNILLFLLTVQLVGLIKSSF). The Cytoplasmic segment spans residues 424–429 (ASCLRG). Residues 430–450 (NIVMVFMSLYSVLYMSSLLPA) form a helical membrane-spanning segment. Residues 451–475 (KMFAIATINKAGWGTSGRKTIVVNF) lie on the Extracellular side of the membrane. The chain crosses the membrane as a helical span at residues 476–496 (IGLIPVSVWFTILLGGVIFTI). The Cytoplasmic segment spans residues 497–510 (YKESKKPFSESKQT). A helical membrane pass occupies residues 511-531 (VLIVGTLIYACYWVMLLTLYV). Over 532–552 (VLINKCGRRKKGQQYDMVLDV) the chain is Extracellular.

It belongs to the NodC/HAS family. As to quaternary structure, homodimer; dimerization promotes enzymatic activity. Forms heterodimer with HAS3. Forms heterodimer with HAS1. Requires Mg(2+) as cofactor. Phosphorylation at Thr-328 is essential for hyaluronan synthase activity. Post-translationally, O-GlcNAcylation at Ser-221 increases the stability of HAS2 and plasma membrane localization. In terms of processing, ubiquitination at Lys-190; this ubiquitination is essential for hyaluronan synthase activity and homo- or hetero-oligomerization. Can also be poly-ubiquitinated. Deubiquitinated by USP17L22/USP17 and USP4. USP17L22/USP17 efficiently removes 'Lys-63'- and 'Lys-48'-linked polyubiquitin chains, whereas USP4 preferentially removes monoubiquitination and, partially, both 'Lys-63'- and 'Lys-48'-linked polyubiquitin chain. In terms of tissue distribution, expressed in heart, brain, spleen, lung and skeletal muscle.

It localises to the cell membrane. Its subcellular location is the endoplasmic reticulum membrane. The protein localises to the vesicle. It is found in the golgi apparatus membrane. The protein resides in the lysosome. The enzyme catalyses [hyaluronan](n) + UDP-N-acetyl-alpha-D-glucosamine = N-acetyl-beta-D-glucosaminyl-(1-&gt;4)-[hyaluronan](n) + UDP + H(+). It carries out the reaction N-acetyl-beta-D-glucosaminyl-(1-&gt;4)-[hyaluronan](n) + UDP-alpha-D-glucuronate = [hyaluronan](n+1) + UDP + H(+). Its pathway is glycan biosynthesis; hyaluronan biosynthesis. Functionally, catalyzes the addition of GlcNAc or GlcUA monosaccharides to the nascent hyaluronan polymer. Therefore, it is essential to hyaluronan synthesis a major component of most extracellular matrices that has a structural role in tissues architectures and regulates cell adhesion, migration and differentiation. This is one of the isozymes catalyzing that reaction and it is particularly responsible for the synthesis of high molecular mass hyaluronan. Required for the transition of endocardial cushion cells into mesenchymal cells, a process crucial for heart development. May also play a role in vasculogenesis. High molecular mass hyaluronan also play a role in early contact inhibition a process which stops cell growth when cells come into contact with each other or the extracellular matrix. In terms of biological role, catalyzes the addition of GlcNAc or GlcUA monosaccharides to the nascent hyaluronan polymer. Therefore, it is essential to hyaluronan synthesis a major component of most extracellular matrices that has a structural role in tissues architectures and regulates cell adhesion, migration and differentiation. This is one of three isoenzymes responsible for cellular hyaluronan synthesis and it is particularly responsible for the synthesis of high molecular mass hyaluronan. This Mus musculus (Mouse) protein is Hyaluronan synthase 2.